The primary structure comprises 128 residues: Calcitonin gene-related peptide 1 (128 aa).

Residues 1-25 (MGLWKSSPFLAFSILVLCQAGGLQA) form the signal peptide. A propeptide spanning residues 26–80 (APFRSALEGLPDPTALSEKEGRLLLAALVKAYVQRKNELEQEQEQETEGSSITAQ) is cleaved from the precursor. The disordered stretch occupies residues 63–83 (ELEQEQEQETEGSSITAQKRS). The segment covering 74–83 (GSSITAQKRS) has biased composition (polar residues). Cysteines 84 and 89 form a disulfide. Phe119 bears the Phenylalanine amide mark. Positions 125–128 (DLRA) are excised as a propeptide.

Belongs to the calcitonin family.

Its subcellular location is the secreted. In terms of biological role, CGRP1/CALCA is a peptide hormone that induces vasodilation mediated by the CALCRL-RAMP1 receptor complex. Dilates a variety of vessels including the coronary, cerebral and systemic vasculature. Its abundance in the CNS also points toward a neurotransmitter or neuromodulator role. It also elevates platelet cAMP. CGRP1 can also bind and activate CALCR-RAMP1 (AMYR1) receptor complex. In Canis lupus familiaris (Dog), this protein is Calcitonin gene-related peptide 1 (CALCA).